Reading from the N-terminus, the 157-residue chain is Protein Smg homolog (157 aa).

It belongs to the Smg family.

The chain is Protein Smg homolog from Photobacterium profundum (strain SS9).